Here is a 158-residue protein sequence, read N- to C-terminus: SsrA-binding protein (158 aa).

The protein belongs to the SmpB family.

The protein resides in the cytoplasm. Required for rescue of stalled ribosomes mediated by trans-translation. Binds to transfer-messenger RNA (tmRNA), required for stable association of tmRNA with ribosomes. tmRNA and SmpB together mimic tRNA shape, replacing the anticodon stem-loop with SmpB. tmRNA is encoded by the ssrA gene; the 2 termini fold to resemble tRNA(Ala) and it encodes a 'tag peptide', a short internal open reading frame. During trans-translation Ala-aminoacylated tmRNA acts like a tRNA, entering the A-site of stalled ribosomes, displacing the stalled mRNA. The ribosome then switches to translate the ORF on the tmRNA; the nascent peptide is terminated with the 'tag peptide' encoded by the tmRNA and targeted for degradation. The ribosome is freed to recommence translation, which seems to be the essential function of trans-translation. In Bartonella quintana (strain Toulouse) (Rochalimaea quintana), this protein is SsrA-binding protein.